Here is a 316-residue protein sequence, read N- to C-terminus: 2,3-dihydroxyphenylpropionate/2,3-dihydroxicinnamic acid 1,2-dioxygenase (316 aa).

His115 functions as the Proton donor in the catalytic mechanism. The active-site Proton acceptor is His179.

Belongs to the LigB/MhpB extradiol dioxygenase family. Homotetramer. Fe(2+) serves as cofactor.

The enzyme catalyses 3-(2,3-dihydroxyphenyl)propanoate + O2 = (2Z,4E)-2-hydroxy-6-oxonona-2,4-dienedioate + H(+). It carries out the reaction (2E)-3-(2,3-dihydroxyphenyl)prop-2-enoate + O2 = (2Z,4E,7E)-2-hydroxy-6-oxonona-2,4,7-trienedioate + H(+). It participates in aromatic compound metabolism; 3-phenylpropanoate degradation. In terms of biological role, catalyzes the non-heme iron(II)-dependent oxidative cleavage of 2,3-dihydroxyphenylpropionic acid and 2,3-dihydroxicinnamic acid into 2-hydroxy-6-ketononadienedioate and 2-hydroxy-6-ketononatrienedioate, respectively. This chain is 2,3-dihydroxyphenylpropionate/2,3-dihydroxicinnamic acid 1,2-dioxygenase, found in Paraburkholderia xenovorans (strain LB400).